The sequence spans 298 residues: uncharacterized protein (298 aa).

10 consecutive transmembrane segments (helical) span residues 9-28, 38-60, 72-94, 104-121, 128-145, 150-167, 174-196, 211-233, 240-262, and 272-291; these read GYVL…LYFK, IIVQ…WKHP, RFVV…VWAV, LGYY…MLLL, LQWL…QQVW, LPWV…YGLI, AALP…WLLF, PEAL…FNAA, ATLG…LLFG, and AFAF…WRSL. The 124-residue stretch at 18–141 folds into the EamA domain; that stretch reads VIWGLFPLYF…AVALASLGVA (124 aa).

The protein belongs to the EamA transporter family.

The protein resides in the cell membrane. This is an uncharacterized protein from Pseudomonas aeruginosa (strain ATCC 15692 / DSM 22644 / CIP 104116 / JCM 14847 / LMG 12228 / 1C / PRS 101 / PAO1).